We begin with the raw amino-acid sequence, 691 residues long: Penicillin-binding protein 2D (691 aa).

The Cytoplasmic segment spans residues 1–19 (MDAMTNKRLRLTLKTVRAF). The chain crosses the membrane as a helical; Signal-anchor for type II membrane protein span at residues 20-40 (IFLGAFAALAAAAVFMTVILI). The Extracellular portion of the chain corresponds to 41 to 691 (AKYQGAPSVQ…WWDKWLGRHH (651 aa)). Positions 55–223 (TILYASDGSK…PSGYSPYVNE (169 aa)) are transglycosylase. Residue E94 is the Proton donor; for transglycosylase activity of the active site. Positions 327 to 605 (VGFSAIDPRT…AKTIWADFME (279 aa)) are transpeptidase. Catalysis depends on S365, which acts as the Acyl-ester intermediate; for transpeptidase activity. The interval 663 to 691 (AKQTKDRLPSKEKPASEKKWWDKWLGRHH) is disordered. Basic and acidic residues predominate over residues 664 to 691 (KQTKDRLPSKEKPASEKKWWDKWLGRHH).

It in the N-terminal section; belongs to the glycosyltransferase 51 family. In the C-terminal section; belongs to the transpeptidase family.

The protein localises to the cell membrane. It carries out the reaction [GlcNAc-(1-&gt;4)-Mur2Ac(oyl-L-Ala-gamma-D-Glu-L-Lys-D-Ala-D-Ala)](n)-di-trans,octa-cis-undecaprenyl diphosphate + beta-D-GlcNAc-(1-&gt;4)-Mur2Ac(oyl-L-Ala-gamma-D-Glu-L-Lys-D-Ala-D-Ala)-di-trans,octa-cis-undecaprenyl diphosphate = [GlcNAc-(1-&gt;4)-Mur2Ac(oyl-L-Ala-gamma-D-Glu-L-Lys-D-Ala-D-Ala)](n+1)-di-trans,octa-cis-undecaprenyl diphosphate + di-trans,octa-cis-undecaprenyl diphosphate + H(+). The enzyme catalyses Preferential cleavage: (Ac)2-L-Lys-D-Ala-|-D-Ala. Also transpeptidation of peptidyl-alanyl moieties that are N-acyl substituents of D-alanine.. It participates in cell wall biogenesis; peptidoglycan biosynthesis. Functionally, involved in the polymerization and cross-linking of spore peptidoglycan. May be required for synthesis of the spore germ cell wall, the first layer of peptidoglycan synthesized on the surface of the inner forespore membrane. This Bacillus subtilis (strain 168) protein is Penicillin-binding protein 2D (pbpG).